We begin with the raw amino-acid sequence, 122 residues long: NLLQFEMMILKMAGRSGIRWYSDYGCYCGKGGHGQPQDATDRCCFVHDCCYGKVSGCDPKDEFYKYSSDNNDIVCGGNNPCLKEICECDRDAAICFRDNLSTYNNKYWNVPSETCQVESEPC.

Intrachain disulfides connect Cys26/Cys115, Cys28/Cys44, Cys43/Cys95, Cys49/Cys122, Cys50/Cys88, Cys57/Cys81, and Cys75/Cys86. Ca(2+)-binding residues include Tyr27, Gly29, and Gly31. Residue His47 is part of the active site. Asp48 is a binding site for Ca(2+). Asp89 is a catalytic residue.

As to quaternary structure, monomer. It depends on Ca(2+) as a cofactor. As to expression, expressed by the venom gland.

It localises to the secreted. It catalyses the reaction a 1,2-diacyl-sn-glycero-3-phosphocholine + H2O = a 1-acyl-sn-glycero-3-phosphocholine + a fatty acid + H(+). Its function is as follows. Snake venom phospholipase A2 (PLA2) that impairs hemostasis. It weakly inhibits ADP-induced platelet aggregation when tested on platelet rich plasma from human and rabbit blood (15-25% of inhibition at 5-10 ug of enzyme), and dose-dependently inhibits blood coagulation, possibly by inhibiting thrombin activation. Exhibits high hydrolytic activities toward L-dipalmitoyl phosphatidylcholine. PLA2 catalyzes the calcium-dependent hydrolysis of the 2-acyl groups in 3-sn-phosphoglycerides. This is Acidic phospholipase A2 Tpu-E6c from Craspedocephalus puniceus (Flat-nosed pitviper).